The primary structure comprises 225 residues: UPF0758 protein BCE_4545 (225 aa).

The MPN domain occupies Ser103–Ile225. Residues His174, His176, and Asp187 each coordinate Zn(2+). Positions His174–Asp187 match the JAMM motif motif.

Belongs to the UPF0758 family.

This is UPF0758 protein BCE_4545 from Bacillus cereus (strain ATCC 10987 / NRS 248).